The sequence spans 221 residues: Zingipain-1 (221 aa).

3 cysteine pairs are disulfide-bonded: Cys24/Cys65, Cys58/Cys98, and Cys155/Cys206. Cys27 is an active-site residue. 2 N-linked (GlcNAc...) asparagine glycosylation sites follow: Asn95 and Asn156. Catalysis depends on residues His161 and Asn181.

This sequence belongs to the peptidase C1 family.

The enzyme catalyses Preferential cleavage of peptides with a proline residue at the P2 position.. Functionally, cysteine proteinase with a high level of diversity in substrate specificity, an amino acid bearing a proline residue at the P2 position is preferred. This Zingiber officinale (Ginger) protein is Zingipain-1.